The following is a 140-amino-acid chain: Putative nickel-responsive regulator (140 aa).

Ni(2+) is bound by residues His76, His87, His89, and Cys95.

It belongs to the transcriptional regulatory CopG/NikR family. Requires Ni(2+) as cofactor.

In terms of biological role, transcriptional regulator. This Rhodopseudomonas palustris (strain BisB5) protein is Putative nickel-responsive regulator.